An 898-amino-acid chain; its full sequence is Chaperone protein ClpB 1 (898 aa).

In terms of domain architecture, Clp R spans 6-148 (PTKFTEQAWD…ELAIKAIRGS (143 aa)). 2 repeat regions span residues 9–74 (FTEQ…TNRQ) and 85–148 (LGRS…IRGS). The NBD1 stretch occupies residues 161–344 (EALDKYGRDL…RRFQQVYVKQ (184 aa)). 208–215 (GEPGVGKT) serves as a coordination point for ATP. The linker stretch occupies residues 345–560 (PSVDDTISIL…IAEIVAGWTG (216 aa)). The stretch at 395–536 (IDLVDEAAAR…KESKLLEIQG (142 aa)) forms a coiled coil. The NBD2 stretch occupies residues 570 to 781 (ERQKLLQLEG…RIDDLIIFHT (212 aa)). 620 to 627 (GPTGVGKT) lines the ATP pocket. The tract at residues 782-898 (LKRDELRRIV…TAVEVEVLSS (117 aa)) is C-terminal.

Belongs to the ClpA/ClpB family. In terms of assembly, homohexamer. The oligomerization is ATP-dependent.

The protein resides in the cytoplasm. In terms of biological role, part of a stress-induced multi-chaperone system, it is involved in the recovery of the cell from heat-induced damage, in cooperation with DnaK, DnaJ and GrpE. Acts before DnaK, in the processing of protein aggregates. Protein binding stimulates the ATPase activity; ATP hydrolysis unfolds the denatured protein aggregates, which probably helps expose new hydrophobic binding sites on the surface of ClpB-bound aggregates, contributing to the solubilization and refolding of denatured protein aggregates by DnaK. The sequence is that of Chaperone protein ClpB 1 (clpB1) from Synechocystis sp. (strain ATCC 27184 / PCC 6803 / Kazusa).